The chain runs to 270 residues: Phosphonates import ATP-binding protein PhnC 2 (270 aa).

Residues 2 to 245 enclose the ABC transporter domain; it reads LVVEGLTCRF…IARELYDLEA (244 aa). An ATP-binding site is contributed by 34–41; sequence GRSGAGKS.

The protein belongs to the ABC transporter superfamily. Phosphonates importer (TC 3.A.1.9.1) family. The complex is composed of two ATP-binding proteins (PhnC), two transmembrane proteins (PhnE) and a solute-binding protein (PhnD).

Its subcellular location is the cell inner membrane. The enzyme catalyses phosphonate(out) + ATP + H2O = phosphonate(in) + ADP + phosphate + H(+). Part of the ABC transporter complex PhnCDE involved in phosphonates import. Responsible for energy coupling to the transport system. In Rhodopseudomonas palustris (strain BisA53), this protein is Phosphonates import ATP-binding protein PhnC 2.